The sequence spans 268 residues: Helix-loop-helix protein 6 (268 aa).

Positions 117–130 (QSQVQPQLPTQSQP) are enriched in low complexity. The segment at 117–140 (QSQVQPQLPTQSQPKPSSKASLDT) is disordered. The segment covering 131-140 (KPSSKASLDT) has biased composition (polar residues). Residues 173–225 (SSVWKRNERERCRVRNVNDGYERLRKHLPVHFDEKRISKVDTLRLAIRYIKHL) enclose the bHLH domain.

Expressed in the gland cells of the pharynx and weakly in the pharyngeal neuron.

The protein localises to the nucleus. Its function is as follows. Transcription factor that regulates the development of the g2 pharyngeal gland cells and pharyngeal gland function and thereby is required for feeding. Required for the expression of a number of genes in the pharyngeal gland, possibly by binding to the E box motif (5'-CANNTG-3') in the promoter region of these genes. Positively regulates the expression of genes encoding mucin-like proteins, which lubricate the pharyngeal tract to ensure efficient passage of the bacterial food source. Exhibits pharyngeal gland-specific positive autoregulation activity. The sequence is that of Helix-loop-helix protein 6 (hlh-6) from Caenorhabditis elegans.